The primary structure comprises 334 residues: Formamidase (334 aa).

The region spanning 14–260 (FLVAAIQFPV…WEIVTGEIYP (247 aa)) is the CN hydrolase domain. The active-site Proton acceptor is E60. The active-site Proton donor is K133. C166 serves as the catalytic Nucleophile.

It belongs to the carbon-nitrogen hydrolase superfamily. Aliphatic amidase family.

The enzyme catalyses formamide + H2O = formate + NH4(+). Its function is as follows. Is an aliphatic amidase with a restricted substrate specificity, as it only hydrolyzes formamide. This Helicobacter acinonychis (strain Sheeba) protein is Formamidase.